A 293-amino-acid chain; its full sequence is Outer membrane protein assembly factor BamD (293 aa).

The N-terminal stretch at 1-26 is a signal peptide; the sequence is MIQRPTFFSPIHLLAVLLATFILITG. Residue Cys-27 is the site of N-palmitoyl cysteine attachment. Residue Cys-27 is the site of S-diacylglycerol cysteine attachment.

The protein belongs to the BamD family. Part of the Bam complex.

The protein localises to the cell outer membrane. Functionally, part of the outer membrane protein assembly complex, which is involved in assembly and insertion of beta-barrel proteins into the outer membrane. This is Outer membrane protein assembly factor BamD from Xylella fastidiosa (strain Temecula1 / ATCC 700964).